The following is a 162-amino-acid chain: Early E1A 18 kDa protein (162 aa).

Positions 134 to 162 (EEPTEGVAENSLKRQADSSLCSSSPKRFC) are disordered. A compositionally biased stretch (polar residues) spans 150-162 (DSSLCSSSPKRFC).

This Tree shrew adenovirus serotype 1 (TSAdV-1) protein is Early E1A 18 kDa protein.